We begin with the raw amino-acid sequence, 211 residues long: Uridine kinase (211 aa).

12–19 (GGSGSGKT) contacts ATP.

Belongs to the uridine kinase family.

Its subcellular location is the cytoplasm. It catalyses the reaction uridine + ATP = UMP + ADP + H(+). The catalysed reaction is cytidine + ATP = CMP + ADP + H(+). It participates in pyrimidine metabolism; CTP biosynthesis via salvage pathway; CTP from cytidine: step 1/3. Its pathway is pyrimidine metabolism; UMP biosynthesis via salvage pathway; UMP from uridine: step 1/1. This is Uridine kinase from Bacillus licheniformis (strain ATCC 14580 / DSM 13 / JCM 2505 / CCUG 7422 / NBRC 12200 / NCIMB 9375 / NCTC 10341 / NRRL NRS-1264 / Gibson 46).